Reading from the N-terminus, the 484-residue chain is MEAMKETVEESLREMRETFASGRTRSLKWRKAQIGAIYEMVKDNEDKICNALFQDLGKHSTEAFRDELGVVLRTATVAINCLDKWAVPKHSKLPLLFYPAKGKVISEPYGTVLVLSSWNFPISLSLDPLIGAIAAGNTVLLKSSELSPNASAFLAKTIPAYLDTKAIKVIEGGPDVATILLQHQWDKIFFTGSPKIGRIIMAAAAQHLTPVTLELGGKCPTIVDHHTISKNIKSVVKRIAGGKWGSCNGQACISVDYVLIEKSFAPTLIDMLKPTIKSFFGENPKESGCLSRIANKHHVQRLSRLLSDPRVQASIVYGGSIDEDKLYVEPTILLDPPLDSEIMNEEIFGPILPIITVRDIQESIGIINTKPKPLAIYAFTNDENLKTRILSETSSGSVTFNDVMIQYMCDALPFGGVGESGIGRYHGKYSFDCFSHEKAIMEGSLGMDLEARYPPWNNFKLTFIRLAFREAYFKLILLMLGLKR.

192–197 serves as a coordination point for NAD(+); sequence GSPKIG. Glutamate 214 serves as the catalytic Proton acceptor. Cysteine 252 functions as the Nucleophile in the catalytic mechanism.

Belongs to the aldehyde dehydrogenase family. In terms of assembly, homotetramer. In terms of tissue distribution, constituively expressed at low levels.

It catalyses the reaction an aldehyde + NAD(+) + H2O = a carboxylate + NADH + 2 H(+). In Arabidopsis thaliana (Mouse-ear cress), this protein is Aldehyde dehydrogenase family 3 member F1 (ALDH3F1).